The sequence spans 163 residues: Staphylokinase (163 aa).

A signal peptide spans 1–27 (MLKRGLLFLTVLLLLFSFSSITNEVSA).

The protein belongs to the staphylokinase family.

Its subcellular location is the secreted. In terms of biological role, potent plasminogen activator that converts plasminogen into plasmin. It forms a 1:1 complex with plasmin, which in turn activates other plasminogen molecules. The polypeptide is Staphylokinase (sak) (Staphylococcus aureus (strain MRSA252)).